The sequence spans 144 residues: Large ribosomal subunit protein uL16 (144 aa).

The span at 1-19 (MLLPKRVKYRRQHRPKTTG) shows a compositional bias: basic residues. A disordered region spans residues 1 to 23 (MLLPKRVKYRRQHRPKTTGRSKG).

This sequence belongs to the universal ribosomal protein uL16 family. Part of the 50S ribosomal subunit.

Binds 23S rRNA and is also seen to make contacts with the A and possibly P site tRNAs. This chain is Large ribosomal subunit protein uL16, found in Staphylococcus saprophyticus subsp. saprophyticus (strain ATCC 15305 / DSM 20229 / NCIMB 8711 / NCTC 7292 / S-41).